The sequence spans 124 residues: Putative calmodulin-3 (124 aa).

EF-hand domains follow at residues G1–N18, P19–D54, D56–K91, and L92–K124. The Ca(2+) site is built by C2, E7, D32, D34, N36, T38, E43, D69, D71, N73, and E80. K91 is modified (N6,N6,N6-trimethyllysine). Positions 105, 107, 109, 111, and 116 each coordinate Ca(2+).

Belongs to the calmodulin family. As to expression, not detected in the organs tested.

In terms of biological role, calmodulin mediates the control of a large number of enzymes, ion channels and other proteins by Ca(2+). Among the enzymes to be stimulated by the calmodulin-Ca(2+) complex are a number of protein kinases and phosphatases. This Solanum tuberosum (Potato) protein is Putative calmodulin-3 (PCM3).